We begin with the raw amino-acid sequence, 306 residues long: Ribonuclease BN (306 aa).

Positions 64, 66, 68, 69, 141, 212, and 270 each coordinate Zn(2+). The active-site Proton acceptor is Asp-68.

Belongs to the RNase Z family. RNase BN subfamily. In terms of assembly, homodimer. Zn(2+) serves as cofactor.

In terms of biological role, zinc phosphodiesterase, which has both exoribonuclease and endoribonuclease activities. This chain is Ribonuclease BN, found in Klebsiella pneumoniae (strain 342).